A 184-amino-acid polypeptide reads, in one-letter code: MLNDIKNNAQTRMAKSIDALKHTLTSIRTGRATPALLDRVTVNAYGNASTPLNQVASISNADAHSLLVTPFDKGMIKEIEKGLYNAEFTPNTLGTAIRINMPPPTEERRKELVKQVQKEGEGAKIAIRNIRQDANKEIAKLVKDKAISEDEKKRGEDDIQKLTDTNIKDVDKVVADKEKELLSV.

It belongs to the RRF family.

It is found in the cytoplasm. In terms of biological role, responsible for the release of ribosomes from messenger RNA at the termination of protein biosynthesis. May increase the efficiency of translation by recycling ribosomes from one round of translation to another. In Stenotrophomonas maltophilia (strain K279a), this protein is Ribosome-recycling factor.